The sequence spans 251 residues: 3-isopropylmalate dehydratase small subunit 1 (251 aa).

The transit peptide at 1–59 (MAASLQSANPTLSRTLASPNKPSSFATFRSPFLRFNSTSVASNFKPLVSREASSSFVTR) directs the protein to the chloroplast.

The protein belongs to the LeuD family. Heterodimer of the large LEUC/IIL1 subunit and the small LEUD (SSU1, SSU2 or SSU3) subunits. In terms of tissue distribution, expressed at low levels in roots, root tips, at the basis of the hypocotyls, and in emerging leaves. In young seedlings, expressed in cotyledon epidermal cells. In hypocotyls, expressed in peripheral cells. In seedling roots, expressed in the epidermis, including root hairs, and throughout the cortex. In rosette leaves, expressed in the upper and lower epidermis. In roots of adult plants, expressed in the root tips and cortex of the mature root enclosing the stele. In flowering stalks, expressed in the epidermis. Expressed in the carpel epidermis.

It is found in the plastid. Its subcellular location is the chloroplast stroma. It carries out the reaction (2R,3S)-3-isopropylmalate = (2S)-2-isopropylmalate. It functions in the pathway amino-acid biosynthesis; L-leucine biosynthesis; L-leucine from 3-methyl-2-oxobutanoate: step 2/4. Catalyzes the isomerization between 2-isopropylmalate and 3-isopropylmalate, via the formation of 2-isopropylmaleate. Plays an essential role in leucine biosynthesis. Functions in both the biosynthesis of leucine, and in the methionine chain elongation pathway of aliphatic glucosinolate formation. Plays an essential role in female gametophyte development. In Arabidopsis thaliana (Mouse-ear cress), this protein is 3-isopropylmalate dehydratase small subunit 1.